The chain runs to 234 residues: ATP-dependent dethiobiotin synthetase BioD (234 aa).

ATP is bound at residue 12 to 17 (DVGKTF). Thr-16 contacts Mg(2+). Lys-37 is an active-site residue. Thr-41 is a substrate binding site. ATP is bound by residues Asp-54 and 115–118 (EGAG). Mg(2+)-binding residues include Asp-54 and Glu-115.

The protein belongs to the dethiobiotin synthetase family. Homodimer. The cofactor is Mg(2+).

It localises to the cytoplasm. It carries out the reaction (7R,8S)-7,8-diammoniononanoate + CO2 + ATP = (4R,5S)-dethiobiotin + ADP + phosphate + 3 H(+). Its pathway is cofactor biosynthesis; biotin biosynthesis; biotin from 7,8-diaminononanoate: step 1/2. Catalyzes a mechanistically unusual reaction, the ATP-dependent insertion of CO2 between the N7 and N8 nitrogen atoms of 7,8-diaminopelargonic acid (DAPA, also called 7,8-diammoniononanoate) to form a ureido ring. The polypeptide is ATP-dependent dethiobiotin synthetase BioD (Lysinibacillus sphaericus (Bacillus sphaericus)).